A 485-amino-acid polypeptide reads, in one-letter code: Noelin (485 aa).

Positions 1–24 (MSVPLLKIGVVLSTMAMITNWMSQ) are cleaved as a signal peptide. N33, N103, N187, N288, N307, N394, N431, and N473 each carry an N-linked (GlcNAc...) asparagine glycan. A coiled-coil region spans residues 87–225 (RDARTKQLRQ…ERLRACMQKL (139 aa)). An Olfactomedin-like domain is found at 226-478 (ACGKLTGISD…QTLYNVTLFH (253 aa)). C227 and C409 are disulfide-bonded.

In terms of assembly, homotetramer; disulfide-linked. Dimer of dimers, giving rise to a V-shaped homotretramer. Isoform 1 and isoform 3 interact with RTN4R. Identified in a complex with RTN4R and LINGO1. Peripherally associated with AMPAR complex. AMPAR complex consists of an inner core made of 4 pore-forming GluA/GRIA proteins (GRIA1, GRIA2, GRIA3 and GRIA4) and 4 major auxiliary subunits arranged in a twofold symmetry. One of the two pairs of distinct binding sites is occupied either by CNIH2, CNIH3 or CACNG2, CACNG3. The other harbors CACNG2, CACNG3, CACNG4, CACNG8 or GSG1L. This inner core of AMPAR complex is complemented by outer core constituents binding directly to the GluA/GRIA proteins at sites distinct from the interaction sites of the inner core constituents. Outer core constituents include at least PRRT1, PRRT2, CKAMP44/SHISA9, FRRS1L and NRN1. The proteins of the inner and outer core serve as a platform for other, more peripherally associated AMPAR constituents, including OLFM1. Alone or in combination, these auxiliary subunits control the gating and pharmacology of the AMPAR complex and profoundly impact their biogenesis and protein processing. Interacts with OLFM2. Post-translationally, in isoform 3 and isoform 4, the signal peptide is predicted to end in position 17. As to expression, expressed in the brain (at protein level). Expressed in the brain, predominantly in the cortex and hippocampus. In the pituitary only the two A-type and in the adrenal glands only the two B-type forms were detected.

It is found in the secreted. The protein localises to the synapse. The protein resides in the endoplasmic reticulum. Its subcellular location is the cell projection. It localises to the axon. It is found in the perikaryon. Contributes to the regulation of axonal growth in the embryonic and adult central nervous system by inhibiting interactions between RTN4R and LINGO1. Inhibits RTN4R-mediated axon growth cone collapse. May play an important role in regulating the production of neural crest cells by the neural tube. May be required for normal responses to olfactory stimuli. This is Noelin (Olfm1) from Rattus norvegicus (Rat).